Here is a 33-residue protein sequence, read N- to C-terminus: Brevinin-2Rk (33 aa).

A disulfide bridge connects residues C27 and C33.

As to expression, expressed by the skin glands.

The protein localises to the secreted. Its function is as follows. Antimicrobial peptide. This is Brevinin-2Rk from Pelophylax ridibundus (Marsh frog).